A 141-amino-acid chain; its full sequence is Ly6/PLAUR domain-containing protein 1 (141 aa).

The signal sequence occupies residues 1–20; it reads MWVLGIAATFCGLFWLPGLA. Intrachain disulfides connect Cys25-Cys54, Cys28-Cys37, Cys46-Cys71, Cys77-Cys100, Cys88-Cys97, and Cys101-Cys106. A UPAR/Ly6 domain is found at 25–107; it reads CYQCEEFQLN…ISCCNTPLCN (83 aa). Asn45 carries an N-linked (GlcNAc...) asparagine glycan. Gly115 carries GPI-anchor amidated glycine lipidation. Positions 116–141 are cleaved as a propeptide — removed in mature form; that stretch reads SSASAIRPGLLTTLLFFHLALCLAHC.

As to quaternary structure, interacts with CHRNA4 and nAChRs containing alpha-4:beta-2 (CHRNA4:CHRNB2) and alpha-7 (CHRNA7) subunits. Preferentially expressed in the nervous system. Expressed in embryonic and postnatal postmitotic central and peripheral neurons including subpopulations of motor neurons, sensory neurons, interneurons and neurons of the autonomous nervous system. Expressed around the growing nerves in the limb bud. Expressed at high levels in specific brain regions such as the prefrontal cortex, amygdala, hippocampus, mediodorsal thalamus, dentate gyrus and specific brainstem nuclei (at protein level).

It localises to the cell membrane. Its function is as follows. Believed to act as a modulator of nicotinic acetylcholine receptors (nAChRs) activity. In vitro increases receptor desensitization and decreases affinity for ACh of alpha-4:beta-2-containing nAChRs. May play a role in the intracellular trafficking of alpha-4:beta-2 and alpha-7-containing nAChRs and may inhibit their expression at the cell surface. May be involved in the control of anxiety. This is Ly6/PLAUR domain-containing protein 1 (Lypd1) from Mus musculus (Mouse).